We begin with the raw amino-acid sequence, 383 residues long: Acetylornithine deacetylase (383 aa).

Residue His80 coordinates Zn(2+). Asp82 is a catalytic residue. Asp112 provides a ligand contact to Zn(2+). The active site involves Glu144. Positions 145, 169, and 355 each coordinate Zn(2+).

This sequence belongs to the peptidase M20A family. ArgE subfamily. Homodimer. It depends on Zn(2+) as a cofactor. Co(2+) serves as cofactor. The cofactor is glutathione.

Its subcellular location is the cytoplasm. It carries out the reaction N(2)-acetyl-L-ornithine + H2O = L-ornithine + acetate. It functions in the pathway amino-acid biosynthesis; L-arginine biosynthesis; L-ornithine from N(2)-acetyl-L-ornithine (linear): step 1/1. Functionally, catalyzes the hydrolysis of the amide bond of N(2)-acetylated L-amino acids. Cleaves the acetyl group from N-acetyl-L-ornithine to form L-ornithine, an intermediate in L-arginine biosynthesis pathway, and a branchpoint in the synthesis of polyamines. This is Acetylornithine deacetylase from Escherichia coli O45:K1 (strain S88 / ExPEC).